We begin with the raw amino-acid sequence, 1124 residues long: Anillin (1124 aa).

Methionine 1 is modified (N-acetylmethionine). Residues 1 to 25 (MDPFTEKLLERTRARRENLQRKMAE) show a composition bias toward basic and acidic residues. A required for ubiquitination region spans residues 1–45 (MDPFTEKLLERTRARRENLQRKMAERPTAAPRSMTHAKRARQPLS). Disordered regions lie at residues 1–113 (MDPF…ADTI) and 136–196 (ATAA…ATPV). The segment at 1-155 (MDPFTEKLLE…MQKLAEQRRR (155 aa)) is interaction with CD2AP. The interval 1–230 (MDPFTEKLLE…AKQNSVQEQP (230 aa)) is nuclear localization. Serine 54 and serine 72 each carry phosphoserine. A compositionally biased stretch (polar residues) spans 77-96 (VEVSNLENKQPVESTSAKSC). Phosphoserine is present on residues serine 97 and serine 102. Over residues 97–108 (SPSPVSPQVQPQ) the composition is skewed to low complexity. Residues 148-158 (KLAEQRRRWDN) are compositionally biased toward basic and acidic residues. A phosphoserine mark is found at serine 172 and serine 182. Threonine 194 carries the phosphothreonine modification. Residues serine 225 and serine 252 each carry the phosphoserine modification. The tract at residues 231 to 676 (GTACLSKFSS…RDLLYSIDAY (446 aa)) is interaction with F-actin. Lysine 254 participates in a covalent cross-link: Glycyl lysine isopeptide (Lys-Gly) (interchain with G-Cter in SUMO1). Position 261 is a phosphoserine (serine 261). The segment covering 294-305 (TSPVKSTTSITD) has biased composition (polar residues). The disordered stretch occupies residues 294 to 328 (TSPVKSTTSITDAKSCEGQNPELLPKTPISPLKTG). Threonine 320 carries the post-translational modification Phosphothreonine. A phosphoserine mark is found at serine 323 and serine 339. A Phosphothreonine modification is found at threonine 364. Lysine 371 carries the post-translational modification N6-acetyllysine. A compositionally biased stretch (basic and acidic residues) spans 380 to 389 (RCQEHSKESP). Residues 380 to 399 (RCQEHSKESPARSTPHRTPI) are disordered. Phosphothreonine occurs at positions 397 and 401. 7 positions are modified to phosphoserine: serine 417, serine 419, serine 449, serine 485, serine 518, serine 553, and serine 561. The stretch at 569–604 (FSDVLEEGELDMEKSQEEMDQALAESSEEQEDALNI) forms a coiled coil. Disordered regions lie at residues 579 to 600 (DMEKSQEEMDQALAESSEEQED) and 625 to 664 (LVSTPRLELKDTSRSDESPKPGKFQRTRVPRAESGDSLGS). Composition is skewed to basic and acidic residues over residues 631–644 (LELKDTSRSDESPK) and 654–664 (PRAESGDSLGS). Phosphoserine occurs at positions 637, 642, 658, 661, and 664. At tyrosine 671 the chain carries Phosphotyrosine. Serine 678, serine 688, serine 792, and serine 927 each carry phosphoserine. Residues 730–1124 (QQTVIYQASQ…DACYKPIGKP (395 aa)) form a localization to the cleavage furrow region. A PH domain is found at 983–1107 (SVEERGFLTI…WMQKLNQVLV (125 aa)).

As to quaternary structure, interacts with F-actin. Interacts with CD2AP. May interact with RHOA. Interacts with FZR1/CDH1 during mitotic exit. Phosphorylated during mitosis. In terms of processing, ubiquitinated, and this requires FZR1/CDH1. Ubiquitously expressed. Present at highest levels in the brain, at high levels in the placenta and testis, at intermediate levels in the intestine, ovary, skeletal muscle and thymus and at lower levels in heart, kidney, liver, lung, pancreas, prostate and spleen. In the kidney, it is widely expressed in tubules, but sparsely expressed in the glomerulus. Expression is significantly increased in renal biopsy specimens from idiopathic FSGS. Overexpressed in many tumor types including breast, colorectal, endometrial, hepatic, kidney, lung, ovarian and pancreatic tumors.

Its subcellular location is the nucleus. The protein resides in the cytoplasm. It localises to the cytoskeleton. It is found in the cell cortex. The protein localises to the cell projection. Its subcellular location is the bleb. Its function is as follows. Required for cytokinesis. Essential for the structural integrity of the cleavage furrow and for completion of cleavage furrow ingression. Plays a role in bleb assembly during metaphase and anaphase of mitosis. May play a significant role in podocyte cell migration. This is Anillin (ANLN) from Homo sapiens (Human).